A 110-amino-acid chain; its full sequence is Antimicrobial peptide microplusin (110 aa).

The N-terminal stretch at 1–20 (MKAIFVSALLVVALVASTSA) is a signal peptide. Intrachain disulfides connect C26-C72, C39-C100, and C61-C66.

Expressed in the hemocytes, fat body and ovaries.

Its subcellular location is the secreted. Functionally, has bacteriostatic activity against the Gram-positive bacterium M.luteus, but not against Gram-negative bacterium E.coli SBS363. Has fungistatic activity against C.neoformans, but not C.albicans. Binds and sequesters copper and iron ions. Copper-chelating is crucial for antimicrobial activity against M.luteus. The protein is Antimicrobial peptide microplusin of Rhipicephalus microplus (Cattle tick).